The sequence spans 240 residues: NAD(P)H-quinone oxidoreductase subunit K (240 aa).

[4Fe-4S] cluster-binding residues include C55, C56, C120, and C151.

It belongs to the complex I 20 kDa subunit family. As to quaternary structure, NDH-1 can be composed of about 15 different subunits; different subcomplexes with different compositions have been identified which probably have different functions. It depends on [4Fe-4S] cluster as a cofactor.

The protein localises to the cellular thylakoid membrane. The enzyme catalyses a plastoquinone + NADH + (n+1) H(+)(in) = a plastoquinol + NAD(+) + n H(+)(out). It catalyses the reaction a plastoquinone + NADPH + (n+1) H(+)(in) = a plastoquinol + NADP(+) + n H(+)(out). Its function is as follows. NDH-1 shuttles electrons from an unknown electron donor, via FMN and iron-sulfur (Fe-S) centers, to quinones in the respiratory and/or the photosynthetic chain. The immediate electron acceptor for the enzyme in this species is believed to be plastoquinone. Couples the redox reaction to proton translocation, and thus conserves the redox energy in a proton gradient. Cyanobacterial NDH-1 also plays a role in inorganic carbon-concentration. The sequence is that of NAD(P)H-quinone oxidoreductase subunit K from Trichodesmium erythraeum (strain IMS101).